A 315-amino-acid polypeptide reads, in one-letter code: CRISPR-associated endonuclease Cas1 1 (315 aa).

The Mn(2+) site is built by glutamate 144, histidine 208, and glutamate 223.

Belongs to the CRISPR-associated endonuclease Cas1 family. In terms of assembly, homodimer, forms a heterotetramer with a Cas2 homodimer. Mg(2+) serves as cofactor. Mn(2+) is required as a cofactor.

CRISPR (clustered regularly interspaced short palindromic repeat), is an adaptive immune system that provides protection against mobile genetic elements (viruses, transposable elements and conjugative plasmids). CRISPR clusters contain spacers, sequences complementary to antecedent mobile elements, and target invading nucleic acids. CRISPR clusters are transcribed and processed into CRISPR RNA (crRNA). Acts as a dsDNA endonuclease. Involved in the integration of spacer DNA into the CRISPR cassette. This chain is CRISPR-associated endonuclease Cas1 1, found in Thermus thermophilus (strain ATCC 27634 / DSM 579 / HB8).